The sequence spans 470 residues: 4-O-methyltransferase 1 (470 aa).

S-adenosyl-L-methionine is bound by residues 274 to 275 (GG), Asp-297, 328 to 329 (DC), and Lys-344. The active-site Proton acceptor is the His-348.

Belongs to the class I-like SAM-binding methyltransferase superfamily. Cation-independent O-methyltransferase family. COMT subfamily.

Its function is as follows. S-adenosyl-L-methionine-dependent methyltransferase that preferentially catalyzes the methylation of 4-OH phenolic compounds like coniferyl alcohol, vanillyl alcohol and ferrulic acid. May play a role in promoting lignin degradation by methylating and inactivating free-hydroxyl phenolic compounds, products of lignin cleavage which are known inhibitors of lignin peroxidases. The polypeptide is 4-O-methyltransferase 1 (Phanerochaete chrysosporium (strain RP-78 / ATCC MYA-4764 / FGSC 9002) (White-rot fungus)).